Consider the following 526-residue polypeptide: Lysine--tRNA ligase (526 aa).

The Mg(2+) site is built by Glu-431 and Glu-438.

Belongs to the class-II aminoacyl-tRNA synthetase family. As to quaternary structure, homodimer. Requires Mg(2+) as cofactor.

It localises to the cytoplasm. The catalysed reaction is tRNA(Lys) + L-lysine + ATP = L-lysyl-tRNA(Lys) + AMP + diphosphate. The polypeptide is Lysine--tRNA ligase (Chlamydia trachomatis serovar L2b (strain UCH-1/proctitis)).